The sequence spans 345 residues: Ferrochelatase (345 aa).

Residues His-215 and Glu-296 each contribute to the Fe cation site.

The protein belongs to the ferrochelatase family.

The protein resides in the cytoplasm. The catalysed reaction is heme b + 2 H(+) = protoporphyrin IX + Fe(2+). It participates in porphyrin-containing compound metabolism; protoheme biosynthesis; protoheme from protoporphyrin-IX: step 1/1. Catalyzes the ferrous insertion into protoporphyrin IX. The sequence is that of Ferrochelatase from Rhodopseudomonas palustris (strain TIE-1).